Here is a 260-residue protein sequence, read N- to C-terminus: Circadian clock-controlled protein daywake (260 aa).

The first 25 residues, 1–25 (MQLTGASMFLVWVGLLSWVSCRVDA), serve as a signal peptide directing secretion.

The protein belongs to the TO family. As to expression, epidermis of newly eclosed adults.

Functionally, component of the circadian clock or downstream effector of clock function. Required for suppressing daytime sleep (siesta) under ambient environmental temperatures. Part of a heat avoidance mechanism that modulates daytime sleep behavior under different environmental temperatures to minimize the risk of heat exposure. Under cooler ambient temperatures, suppresses daytime sleep (siesta) and thus allows for longer periods of daytime activity. The sequence is that of Circadian clock-controlled protein daywake from Drosophila melanogaster (Fruit fly).